The following is a 477-amino-acid chain: MNTISSHSPIHVVGGGLAGSEAAWQIASSGVPVILHEMRGVRGTDAHKTDGLAELVCSNSFRSDDATSNAVGVIHAEMRMAGSLIMAAADRCQVPAGGALAVDRDGFSEAVTKAVHDHPLITVVREEVTGLPPRDWDLAIVATGPLTAPSLASAIQTETGEDSLAFFDAIAPIVYRESIDMDICWYQSRYDKVGPGGTGKDYINCPMDEAQYNAFVDALILGDTVGFKEWEGTPYFDGCLPIEVMAERGRETLRHGPMKPMGLTNAHNPTVKAYAVVQLRQDNALGTLYNMVGFQTKLKYGAQADIFRMIPGLENAEFARLGGLHRNTYINSPTLLDPSLTLKSRPGLRFAGQITGCEGYVESASVGLMAGRFAAAERKGEAISLPPATTALGSLLGHITGGHLVTDEEPGKRSFQPMNINFGLFPELQPGSIVKPEGVKRFRGKDKTIMKRQLIARRALADCATWLGQESTLAESA.

14 to 19 (GGGLAG) serves as a coordination point for FAD.

It belongs to the MnmG family. TrmFO subfamily. FAD serves as cofactor.

It localises to the cytoplasm. The enzyme catalyses uridine(54) in tRNA + (6R)-5,10-methylene-5,6,7,8-tetrahydrofolate + NADH + H(+) = 5-methyluridine(54) in tRNA + (6S)-5,6,7,8-tetrahydrofolate + NAD(+). It catalyses the reaction uridine(54) in tRNA + (6R)-5,10-methylene-5,6,7,8-tetrahydrofolate + NADPH + H(+) = 5-methyluridine(54) in tRNA + (6S)-5,6,7,8-tetrahydrofolate + NADP(+). Its function is as follows. Catalyzes the folate-dependent formation of 5-methyl-uridine at position 54 (M-5-U54) in all tRNAs. The chain is Methylenetetrahydrofolate--tRNA-(uracil-5-)-methyltransferase TrmFO from Rhizobium johnstonii (strain DSM 114642 / LMG 32736 / 3841) (Rhizobium leguminosarum bv. viciae).